A 267-amino-acid polypeptide reads, in one-letter code: Matrilysin (267 aa).

The first 20 residues, 1-20 (MAAMRLTLFRIVCLLPGCLA), serve as a signal peptide directing secretion. Residues 21–97 (LPLSQEAGEV…PRCGVPDVAE (77 aa)) constitute a propeptide, activation peptide. The Cysteine switch motif lies at 88–95 (PRCGVPDV). A Zn(2+)-binding site is contributed by cysteine 90. Aspartate 156 is a Ca(2+) binding site. Residues histidine 166 and aspartate 168 each contribute to the Zn(2+) site. Positions 173, 174, 176, and 178 each coordinate Ca(2+). Histidine 181 contributes to the Zn(2+) binding site. Residues glycine 188, glycine 190, and aspartate 192 each coordinate Ca(2+). Residue histidine 194 participates in Zn(2+) binding. Ca(2+) contacts are provided by aspartate 196 and glutamate 199. Position 217 (histidine 217) interacts with Zn(2+). Glutamate 218 is a catalytic residue. Residues histidine 221 and histidine 227 each contribute to the Zn(2+) site.

The protein belongs to the peptidase M10A family. Ca(2+) serves as cofactor. Zn(2+) is required as a cofactor.

The protein localises to the secreted. It is found in the extracellular space. The protein resides in the extracellular matrix. It catalyses the reaction Cleavage of 14-Ala-|-Leu-15 and 16-Tyr-|-Leu-17 in B chain of insulin. No action on collagen types I, II, IV, V. Cleaves gelatin chain alpha2(I) &gt; alpha1(I).. In terms of biological role, degrades casein, gelatins of types I, III, IV, and V, and fibronectin. Activates procollagenase. The polypeptide is Matrilysin (Mmp7) (Rattus norvegicus (Rat)).